Consider the following 240-residue polypeptide: Intestine-specific homeobox (240 aa).

A disordered region spans residues 36–82 (PTERRSLPRPQSICKEDSRQTTIPGSKLERPPQDQPQEEKKNKRRVR). The segment covering 62–76 (KLERPPQDQPQEEKK) has biased composition (basic and acidic residues). A DNA-binding region (homeobox) is located at residues 78-137 (KRRVRTTFTTEQLQELEKLFHFTHYPDIHVRSQLASRINLPEARVQIWFQNQRAKWRKQE).

In terms of tissue distribution, expressed in intestinal epithelial cells from the duodenum to the proximal colon.

The protein localises to the nucleus. In terms of biological role, transcription factor that regulates gene expression in intestine. May participate in vitamin A metabolism most likely by regulating BCO1 expression in the intestine. The sequence is that of Intestine-specific homeobox (Isx) from Mus musculus (Mouse).